We begin with the raw amino-acid sequence, 125 residues long: Profilin-A (125 aa).

Ser-2 carries the N-acetylserine modification.

Belongs to the profilin family. Occurs in many kinds of cells as a complex with monomeric actin in a 1:1 ratio.

It localises to the cytoplasm. Its subcellular location is the cytoskeleton. Its function is as follows. Binds to actin and affects the structure of the cytoskeleton. At high concentrations, profilin prevents the polymerization of actin, whereas it enhances it at low concentrations. By binding to PIP2, it inhibits the formation of IP3 and DG. This chain is Profilin-A (PROA), found in Physarum polycephalum (Slime mold).